The chain runs to 669 residues: Pre-mRNA-processing factor 39 (669 aa).

The segment covering 1-10 (MQNSHMDEYR) has biased composition (basic and acidic residues). The tract at residues 1-23 (MQNSHMDEYRNSSNGSTGNSSEV) is disordered. Over residues 11 to 23 (NSSNGSTGNSSEV) the composition is skewed to low complexity. Serine 44 bears the Phosphoserine mark. HAT repeat units lie at residues 109–141 (NHLM…LEKR), 143–175 (DNIK…FLKE), 183–218 (ETNN…WENE), 220–253 (GNLR…HVQN), 333–365 (TFEE…FEIE), 367–399 (GTHE…YMEN), and 404–436 (GVRH…QQGN). Over residues 599 to 624 (KEQDSLKRKAENGSEEPEEKKAHTED) the composition is skewed to basic and acidic residues. Residues 599 to 634 (KEQDSLKRKAENGSEEPEEKKAHTEDTTSSSTQMID) form a disordered region. The segment covering 625-634 (TTSSSTQMID) has biased composition (polar residues).

Belongs to the PRP39 family.

It localises to the nucleus. In terms of biological role, involved in pre-mRNA splicing. The sequence is that of Pre-mRNA-processing factor 39 (PRPF39) from Homo sapiens (Human).